We begin with the raw amino-acid sequence, 528 residues long: Succinate-semialdehyde dehydrogenase, mitochondrial (528 aa).

The N-terminal 34 residues, 1 to 34 (MVIGAAARVAIGGCRKLISSHTSLLLVSSQCRQM), are a transit peptide targeting the mitochondrion. 196-198 (TPW) is an NAD(+) binding site. Arg207 contributes to the substrate binding site. NAD(+) is bound by residues 222-225 (KPSE), 275-280 (GSTAVG), and Glu297. Glu297 acts as the Proton acceptor in catalysis. Arg325 is a binding site for substrate. Cys331 functions as the Nucleophile in the catalytic mechanism. Cys331 and Cys333 are disulfide-bonded. 428–430 (EIF) is an NAD(+) binding site. Position 488 (Ser488) interacts with substrate.

Belongs to the aldehyde dehydrogenase family. In terms of assembly, homotetramer. In terms of tissue distribution, expressed in developing leaf tissues.

It localises to the mitochondrion matrix. It carries out the reaction succinate semialdehyde + NAD(+) + H2O = succinate + NADH + 2 H(+). It functions in the pathway amino-acid degradation; 4-aminobutanoate degradation. Its activity is regulated as follows. Competitive inhibition by NADH. Inhibited by ATP, ADP and AMP. Redox-regulated. Inhibited under oxydizing conditions. Its function is as follows. Oxidizes specifically succinate semialdehyde. Involved in plant response to environmental stress by preventing the accumulation of reactive oxygen species, probably by regulating proline, gamma-hydroxybutyrate (GHB) and gamma-aminobutyrate (GABA) levels. Required for the maintenance of the shoot apical meristem (SAM) structure and subsequent adaxial-abaxial axis-dependent development of cotyledons and leaves. The polypeptide is Succinate-semialdehyde dehydrogenase, mitochondrial (Arabidopsis thaliana (Mouse-ear cress)).